The sequence spans 445 residues: tRNA-2-methylthio-N(6)-dimethylallyladenosine synthase (445 aa).

The 118-residue stretch at 2–119 (KKLYIRTFGC…LPQLIAERRH (118 aa)) folds into the MTTase N-terminal domain. Residues cysteine 11, cysteine 48, cysteine 82, cysteine 156, cysteine 160, and cysteine 163 each coordinate [4Fe-4S] cluster. A Radical SAM core domain is found at 142 to 378 (RVEGASAFVS…RIDQQAQAIS (237 aa)). The region spanning 379–442 (QAMVGRVERA…PHSLRGEIVT (64 aa)) is the TRAM domain.

This sequence belongs to the methylthiotransferase family. MiaB subfamily. As to quaternary structure, monomer. The cofactor is [4Fe-4S] cluster.

The protein localises to the cytoplasm. The enzyme catalyses N(6)-dimethylallyladenosine(37) in tRNA + (sulfur carrier)-SH + AH2 + 2 S-adenosyl-L-methionine = 2-methylsulfanyl-N(6)-dimethylallyladenosine(37) in tRNA + (sulfur carrier)-H + 5'-deoxyadenosine + L-methionine + A + S-adenosyl-L-homocysteine + 2 H(+). Functionally, catalyzes the methylthiolation of N6-(dimethylallyl)adenosine (i(6)A), leading to the formation of 2-methylthio-N6-(dimethylallyl)adenosine (ms(2)i(6)A) at position 37 in tRNAs that read codons beginning with uridine. The protein is tRNA-2-methylthio-N(6)-dimethylallyladenosine synthase of Aromatoleum aromaticum (strain DSM 19018 / LMG 30748 / EbN1) (Azoarcus sp. (strain EbN1)).